Reading from the N-terminus, the 380-residue chain is Chorismate synthase (380 aa).

Residue Arg49 coordinates NADP(+). FMN is bound by residues Gly288, 303-307, and Arg330; that span reads KPPSS.

The protein belongs to the chorismate synthase family. Requires FMNH2 as cofactor.

The enzyme catalyses 5-O-(1-carboxyvinyl)-3-phosphoshikimate = chorismate + phosphate. It participates in metabolic intermediate biosynthesis; chorismate biosynthesis; chorismate from D-erythrose 4-phosphate and phosphoenolpyruvate: step 7/7. Catalyzes the anti-1,4-elimination of the C-3 phosphate and the C-6 proR hydrogen from 5-enolpyruvylshikimate-3-phosphate (EPSP) to yield chorismate, which is the branch point compound that serves as the starting substrate for the three terminal pathways of aromatic amino acid biosynthesis. This reaction introduces a second double bond into the aromatic ring system. This Aeropyrum pernix (strain ATCC 700893 / DSM 11879 / JCM 9820 / NBRC 100138 / K1) protein is Chorismate synthase.